The following is a 552-amino-acid chain: Histone deacetylase 15 (552 aa).

A RanBP2-type zinc finger spans residues 86-115 (EFVKWCCVNCTMSNPGDMVHCCICGEHKES). Residues 149 to 462 (STAVGFDERM…ATAVIKVLLG (314 aa)) are histone deacetylase. Catalysis depends on His-277, which acts as the Proton donor/acceptor. Zn(2+) is bound by residues Asp-313, His-315, and Asp-404.

This sequence belongs to the histone deacetylase family. HD type 2 subfamily. As to quaternary structure, interacts with PIF3 in the dark. Interacts with HY5. Interacts with MYB96. Forms homotetramers. Zn(2+) serves as cofactor. As to expression, expressed in stems, leaves, flowers, siliques and mature seeds.

Its subcellular location is the nucleus. It is found in the cytoplasm. It catalyses the reaction N(6)-acetyl-L-lysyl-[histone] + H2O = L-lysyl-[histone] + acetate. Inhibited by trichostatin A (TSA), a well-known histone deacetylase inhibitor. Its function is as follows. Responsible for the deacetylation of lysine residues on the N-terminal part of the core histones (H2A, H2B, H3 and H4). Histone deacetylation gives a tag for epigenetic repression and plays an important role in transcriptional regulation, cell cycle progression and developmental events. Histone deacetylases act via the formation of large multiprotein complexes. Represses chlorophyll biosynthesis and photosynthesis in the dark. Is recruited by PIF3 to the promoters of chlorophyll biosynthetic and photosynthetic genes, and represses their transcription by histone deacetylation. Involved in the repression of hypocotyl cell elongation to promote photomorphogenesis. Is recruited by HY5 to the promoters of a subset of cell wall organization and auxin signaling-related genes, and represses gene expression by decreasing the levels of histone H4 acetylation in a light-dependent manner. Promotes abscisic acid (ABA) signaling. Is recruited by MYB96 to the promoters of a subset of Rho GTPase (ROP) genes, which repress ABA signaling at the early stages of signal transduction. Represses ROP expression by removing acetyl groups of histone H3 and H4 from the cognate regions, particularly in the presence of ABA. Represses the plant response to elevated ambient temperature by directly repressing warm temperature-responsive genes. This chain is Histone deacetylase 15, found in Arabidopsis thaliana (Mouse-ear cress).